A 118-amino-acid polypeptide reads, in one-letter code: DNA-binding protein YG5714_1868 (118 aa).

Belongs to the PDCD5 family.

This Saccharolobus islandicus (strain Y.G.57.14 / Yellowstone #1) (Sulfolobus islandicus) protein is DNA-binding protein YG5714_1868.